The sequence spans 680 residues: DNA ligase 1 (680 aa).

NAD(+) is bound by residues 35–39, 84–85, and Asp-115; these read DAEYD and SL. Lys-117 acts as the N6-AMP-lysine intermediate in catalysis. NAD(+) contacts are provided by Arg-138, Glu-175, Lys-295, and Lys-319. Positions 413, 416, 431, and 436 each coordinate Zn(2+). The BRCT domain occupies 599-680; that stretch reads REGSQLQGLK…FANLLKGLDR (82 aa).

This sequence belongs to the NAD-dependent DNA ligase family. LigA subfamily. Mg(2+) serves as cofactor. Mn(2+) is required as a cofactor.

The enzyme catalyses NAD(+) + (deoxyribonucleotide)n-3'-hydroxyl + 5'-phospho-(deoxyribonucleotide)m = (deoxyribonucleotide)n+m + AMP + beta-nicotinamide D-nucleotide.. DNA ligase that catalyzes the formation of phosphodiester linkages between 5'-phosphoryl and 3'-hydroxyl groups in double-stranded DNA using NAD as a coenzyme and as the energy source for the reaction. It is essential for DNA replication and repair of damaged DNA. This is DNA ligase 1 from Nitratidesulfovibrio vulgaris (strain DP4) (Desulfovibrio vulgaris).